A 261-amino-acid chain; its full sequence is SLA class II histocompatibility antigen, DQ haplotype C beta chain (261 aa).

The first 31 residues, 1–31, serve as a signal peptide directing secretion; sequence MSGMVALRLPRGLWTAALTVMLVVLGAPVAE. Positions 32–126 are beta-1; the sequence is GRDSPQDFVF…IEEGTTLQRR (95 aa). At 32-230 the chain is on the extracellular side; it reads GRDSPQDFVF…RAQSESAQSK (199 aa). 2 disulfides stabilise this stretch: C47-C111 and C149-C205. Residue N51 is glycosylated (N-linked (GlcNAc...) asparagine). Positions 127–220 are beta-2; the sequence is VQPTVTISPS…SLQNPILVEW (94 aa). One can recognise an Ig-like C1-type domain in the interval 129–233; that stretch reads PTVTISPSKA…SESAQSKMLS (105 aa). The segment at 221–230 is connecting peptide; it reads RAQSESAQSK. The helical transmembrane segment at 231 to 251 threads the bilayer; it reads MLSGVGGFVLGLIFLGLGLFI. Topologically, residues 252 to 261 are cytoplasmic; that stretch reads RHRSQKGLVR.

It belongs to the MHC class II family.

It is found in the membrane. In Sus scrofa (Pig), this protein is SLA class II histocompatibility antigen, DQ haplotype C beta chain.